The following is a 490-amino-acid chain: Cytochrome P450 2C39 (490 aa).

The first 25 residues, 1–25 (MDLVTFLVLTLSSLILLSLWRQSCG), serve as a signal peptide directing secretion. Cys-435 provides a ligand contact to heme.

Belongs to the cytochrome P450 family. The cofactor is heme. In terms of tissue distribution, liver.

It is found in the endoplasmic reticulum membrane. The protein localises to the microsome membrane. The catalysed reaction is an organic molecule + reduced [NADPH--hemoprotein reductase] + O2 = an alcohol + oxidized [NADPH--hemoprotein reductase] + H2O + H(+). It catalyses the reaction (5Z,8Z,11Z,14Z)-eicosatetraenoate + reduced [NADPH--hemoprotein reductase] + O2 = 11,12-epoxy-(5Z,8Z,14Z)-eicosatrienoate + oxidized [NADPH--hemoprotein reductase] + H2O + H(+). The enzyme catalyses (5Z,8Z,11Z,14Z)-eicosatetraenoate + reduced [NADPH--hemoprotein reductase] + O2 = 14,15-epoxy-(5Z,8Z,11Z)-eicosatrienoate + oxidized [NADPH--hemoprotein reductase] + H2O + H(+). Its pathway is lipid metabolism; arachidonate metabolism. A cytochrome P450 monooxygenase that primarily catalyzes the epoxidation of 11,12 and 14,15 double bonds of (5Z,8Z,11Z,14Z)-eicosatetraenoic acid (arachidonate) forming 11,12- and 14,15-epoxyeicosatrienoic acids (11,12- and 14,15-EET) regioisomers. Mechanistically, uses molecular oxygen inserting one oxygen atom into a substrate, and reducing the second into a water molecule, with two electrons provided by NADPH via cytochrome P450 reductase (CPR; NADPH--hemoprotein reductase). This chain is Cytochrome P450 2C39, found in Mus musculus (Mouse).